Reading from the N-terminus, the 461-residue chain is Phosphatidate cytidylyltransferase 1 (461 aa).

The tract at residues 1-68 is disordered; the sequence is MLELRHRGGC…PEVPPSSDRT (68 aa). Arg7 is subject to Omega-N-methylarginine. Over residues 22 to 56 the composition is skewed to basic and acidic residues; the sequence is REGEAAGGDHETESTSDKETDIDDRYGDLDARGDS. A phosphoserine mark is found at Ser35 and Ser37. The next 6 helical transmembrane spans lie at 96 to 116, 149 to 169, 183 to 203, 230 to 250, 279 to 299, and 357 to 377; these read MISLFFLIIYMGSFMLMLLVL, FLLCVNYFFYGETVADYFATF, HRFISFALYLAGFCMFVLSLV, LVIQNLFEGMIWFLVPISSVI, GFIGGFFSTVIFGFIAAYVLS, and IALSTFASLIGPFGGFFASGF.

It belongs to the CDS family. Homodimer. Interacts with FOS; this interaction may enhance catalytic activity. Requires Mg(2+) as cofactor. Expressed in adult brain, eye, smooth muscle and testis. Highly expressed in the inner segment of the photoreceptor layer of adult retina.

The protein resides in the endoplasmic reticulum membrane. It catalyses the reaction a 1,2-diacyl-sn-glycero-3-phosphate + CTP + H(+) = a CDP-1,2-diacyl-sn-glycerol + diphosphate. It carries out the reaction 1-octadecanoyl-2-(5Z,8Z,11Z,14Z-eicosatetraenoyl)-sn-glycero-3-phosphate + CTP + H(+) = 1-octadecanoyl-2-(5Z,8Z,11Z,14Z-eicosatetraenoyl)-sn-glycero-3-cytidine-5'-diphosphate + diphosphate. The catalysed reaction is 1-octadecanoyl-2-(9Z,12Z-octadecadienoyl)-sn-glycero-3-phosphate + CTP + H(+) = 1-octadecanoyl-2-(9Z,12Z-octadecadienoyl)-sn-glycero-3-cytidine-5'-diphosphate + diphosphate. The enzyme catalyses 1-hexadecanoyl-2-(5Z,8Z,11Z,14Z-eicosatetraenoyl)-sn-glycero-3-phosphate + CTP + H(+) = 1-hexadecanoyl-2-(5Z,8Z,11Z,14Z-eicosatetraenoyl)-sn-glycero-3-cytidine-5'-diphosphate + diphosphate. It catalyses the reaction 1,2-di-(5Z,8Z,11Z,14Z)-eicosatetraenoyl-sn-glycero-3-phosphate + CTP + H(+) = 1,2-di-(5Z,8Z,11Z,14Z-eicosatetraenoyl)-sn-glycero-3-cytidine-5'-diphosphate + diphosphate. It carries out the reaction 1-octadecanoyl-2-(9Z-octadecenoyl)-sn-glycero-3-phosphate + CTP + H(+) = 1-octadecanoyl-2-(9Z-octadecenoyl)-sn-glycero-3-cytidine-5'-diphosphate + diphosphate. The catalysed reaction is 1-octadecanoyl-2-(4Z,7Z,10Z,13Z,16Z,19Z-docosahexaenoyl)-sn-glycero-3-phosphate + CTP + H(+) = 1-octadecanoyl-2-(4Z,7Z,10Z,13Z,16Z,19Z-docosahexaenoyl)-sn-glycero-3-cytidine-5'-diphosphate + diphosphate. The enzyme catalyses 1,2-di-(9Z,12Z-octadecadienoyl)-sn-glycero-3-phosphate + CTP + H(+) = 1,2-di-(9Z,12Z-octadecadienoyl)-sn-glycero-3-cytidine-5'-diphosphate + diphosphate. It catalyses the reaction 1,2-di-(9Z-octadecenoyl)-sn-glycero-3-phosphate + CTP + H(+) = 1,2-di-(9Z-octadecenoyl)-sn-glycero-3-cytidine-5'-diphosphate + diphosphate. It functions in the pathway phospholipid metabolism; CDP-diacylglycerol biosynthesis; CDP-diacylglycerol from sn-glycerol 3-phosphate: step 3/3. Its function is as follows. Catalyzes the conversion of phosphatidic acid (PA) to CDP-diacylglycerol (CDP-DAG), an essential intermediate in the synthesis of phosphatidylglycerol, cardiolipin and phosphatidylinositol. Exhibits almost no acyl chain preference for PA, showing no discrimination for the sn-1/sn-2 acyl chain composition of PAs. Plays an important role in regulating the growth of lipid droplets which are storage organelles at the center of lipid and energy homeostasis. Positively regulates the differentiation and development of adipocytes. The chain is Phosphatidate cytidylyltransferase 1 from Mus musculus (Mouse).